Here is an 852-residue protein sequence, read N- to C-terminus: MGESHAPSKPKLDGELCLRPSSSVFLGDQQLYFTQEYLRTNSLNLKYVVYFTACQFSGPIAVAYSPRPASWYIWIRTISGRILKRDMAFNEPVFMEWTRAHCLLVLNKAGRAHIFSSLGEKISEVIFDSQMSDVHECRTFATSRGDSGIAVMDVDGQVSVVNSVSEPVIWSMKPPYSEMPTAWTAFQPHSQLTHILLIFEAVFLMGCQGESLREQSHAASWVDSNTKYVKCVVDDARSRIAMMTESGKIQIVSIDLSTCFCTVEITDHDIAKCINFGWVGNSAVFVQMSPSLIVFVNVSARRKPGDEVQIYEKMTANAKISIEPDGIRLFESTQVEFVEAASREKIAVLNRNPNEDGAHLYKAAQEMSQGTGHNSFAASTVIQDLYKAIDDCISTACDTWQPEEQKLLLKAARFGMAYTNTTPDTTKLMRAIKEIRVLNELRMVRTGIPLTHRQFRAIGETCVINRLIDMGSYSVAIKVAQWLGGETSENVDRVLLEWVRRSISKVSKSNMKMDQPALEALDEKISAKLLQFPHVSIADAARRAIEAKLPELARLFIRRETDDANHVAVLLQLNDVSAALQKASASQRPQLIHQVVRHLMNSESRSSYELAISRIPLAQCLYQDLVRQEGETRGASSRQMLALLEQASDFERQTLFHFDVAETERNPDERLNALRRAKDAAKSMGDKAIEEILNDVSAFAPLQIQRGQADMSVRDTVIEMAHDTAKVAQLKQQARLTDKQVLLWTIEGLAKKGKMEQLFDLAQKRSPIGYAPFVKACVRYKRLDEIKKYFAKVNGYPDLVAAHLAMKNYVEAAKLAYDRRDRDVLHAVHMKSHEDPTQCPRVGQFLRSLDQN.

Belongs to the VPS16 family. Probable core component of at least two putative endosomal tethering complexes, the homotypic fusion and vacuole protein sorting (HOPS) complex and the class C core vacuole/endosome tethering (CORVET) complex. Their common core is composed of the class C Vps proteins vps-11, vps-16 and vps-18, which in HOPS further associates with vps-33.1, vps-39 and vps-41 and in CORVET with vps-8 and vps-33.2.

It is found in the late endosome membrane. It localises to the lysosome membrane. Functionally, plays a role in vesicle-mediated protein trafficking to lysosomal compartments including the endocytic membrane transport pathways. Believed to act as a core component of the putative HOPS and CORVET endosomal tethering complexes which are proposed to be involved in the rab-5-to-rab-7 endosome conversion probably implicating sand-1, and via binding SNAREs and SNARE complexes to mediate tethering and docking events during SNARE-mediated membrane fusion. The HOPS complex is proposed to be recruited to rab-7 on the late endosomal membrane and to regulate late endocytic, phagocytic and autophagic traffic towards lysosomes. Within the HOPS complex, contributes to the normal development of gut granules in the adult intestine. The CORVET complex is proposed to function as a rab-5 effector to mediate early endosome fusion probably in specific endosome subpopulations. Required for recruitment of vps-33.1 to the HOPS complex. Required for fusion of endosomes and autophagosomes with lysosomes; the function is dependent on its association with vps-33.1 but not vps-33.2. This chain is Vacuolar protein sorting-associated protein 16 homolog, found in Caenorhabditis elegans.